Here is an 827-residue protein sequence, read N- to C-terminus: Penicillin-binding protein 1A (827 aa).

Residues 1-18 (MGKKKKKRKSSAFKIILN) lie on the Cytoplasmic side of the membrane. The helical; Signal-anchor for type II membrane protein transmembrane segment at 19 to 39 (VFLSIFLVAGVAFGGIVFAMI) threads the bilayer. At 40 to 827 (KTAPPLNVQQ…QNHEDNKNKQ (788 aa)) the chain is on the extracellular side. A transglycosylase region spans residues 57–229 (SILYDDKGQY…PSVYYPYSSA (173 aa)). Glutamate 96 serves as the catalytic Proton donor; for transglycosylase activity. Residues 357 to 641 (ASAVIMDYHN…AARLWGDIMK (285 aa)) are transpeptidase. Catalysis depends on serine 398, which acts as the Acyl-ester intermediate; for transpeptidase activity. The interval 755-827 (GSLPPTEEKN…QNHEDNKNKQ (73 aa)) is disordered. Over residues 760–790 (TEEKNNSNTRDKNKDKNKDKDKNKNKDKNPS) the composition is skewed to basic and acidic residues. The segment covering 791–817 (QDKPNNNNNNNNNDNNNNTKPPENDSN) has biased composition (low complexity). Positions 818–827 (QNHEDNKNKQ) are enriched in basic and acidic residues.

In the N-terminal section; belongs to the glycosyltransferase 51 family. This sequence in the C-terminal section; belongs to the transpeptidase family.

Its subcellular location is the cell membrane. It catalyses the reaction [GlcNAc-(1-&gt;4)-Mur2Ac(oyl-L-Ala-gamma-D-Glu-L-Lys-D-Ala-D-Ala)](n)-di-trans,octa-cis-undecaprenyl diphosphate + beta-D-GlcNAc-(1-&gt;4)-Mur2Ac(oyl-L-Ala-gamma-D-Glu-L-Lys-D-Ala-D-Ala)-di-trans,octa-cis-undecaprenyl diphosphate = [GlcNAc-(1-&gt;4)-Mur2Ac(oyl-L-Ala-gamma-D-Glu-L-Lys-D-Ala-D-Ala)](n+1)-di-trans,octa-cis-undecaprenyl diphosphate + di-trans,octa-cis-undecaprenyl diphosphate + H(+). The enzyme catalyses Preferential cleavage: (Ac)2-L-Lys-D-Ala-|-D-Ala. Also transpeptidation of peptidyl-alanyl moieties that are N-acyl substituents of D-alanine.. It participates in cell wall biogenesis; peptidoglycan biosynthesis. Cell wall formation. Synthesis of cross-linked peptidoglycan from the lipid intermediates. The enzyme has a penicillin-insensitive transglycosylase N-terminal domain (formation of linear glycan strands) and a penicillin-sensitive transpeptidase C-terminal domain (cross-linking of the peptide subunits). The polypeptide is Penicillin-binding protein 1A (pbpA) (Clostridium botulinum (strain Langeland / NCTC 10281 / Type F)).